Reading from the N-terminus, the 237-residue chain is RNA-binding protein 38 (237 aa).

Residues 1-24 are disordered; sequence MLLQPACSPSVFPRPSAAPSAMHG. The RRM domain maps to 32–109; that stretch reads TKIFVGGLPY…RKANVNLAYL (78 aa).

The protein belongs to the RBM38 family. As to expression, expressed in cardiac and skeletal muscle tissues.

Its subcellular location is the cytoplasm. The protein localises to the cytosol. The protein resides in the nucleus. Functionally, RNA-binding protein that specifically bind the 3'-UTR of CDKN1A transcripts, leading to maintain the stability of CDKN1A transcripts, thereby acting as a mediator of the p53/TP53 family to regulate CDKN1A. CDKN1A is a cyclin-dependent kinase inhibitor transcriptionally regulated by the p53/TP53 family to induce cell cycle arrest. Has the ability to induce cell cycle arrest in G1 and maintain the stability of CDKN1A transcripts induced by p53/TP53. Also acts as a mRNA splicing factor. Specifically regulates the expression of FGFR2-IIIb, an epithelial cell-specific isoform of FGFR2. Plays a role in myogenic differentiation. The sequence is that of RNA-binding protein 38 (Rbm38) from Mus musculus (Mouse).